A 430-amino-acid chain; its full sequence is Retinoic acid receptor RXR-alpha-A (430 aa).

Over residues 1 to 20 (MHPSLLSPTSLGPSGSLHSP) the composition is skewed to low complexity. Disordered stretches follow at residues 1-25 (MHPS…STLS) and 48-73 (ASPG…SSSE). Residues 1–99 (MHPSLLSPTS…QPSGTPLSLT (99 aa)) are modulating. A compositionally biased stretch (polar residues) spans 58–72 (ISPQLNSHMNSVSSS). Positions 100 to 175 (KHICAICGDR…MGMKREAVQE (76 aa)) form a DNA-binding region, nuclear receptor. C103, C106, C120, and C123 together coordinate Zn(2+). An NR C4-type zinc finger spans residues 103–123 (CAICGDRSSGKHYGVYSCEGC). The interval 128 to 133 (KRTVRK) is nuclear localization signal. Residues C139, C145, C155, and C158 each contribute to the Zn(2+) site. An NR C4-type zinc finger spans residues 139–158 (CRDNKDCVIDKRQRNRCQYC). A compositionally biased stretch (basic and acidic residues) spans 174 to 186 (QEERQRAKERSEN). Positions 174–196 (QEERQRAKERSENEVESTSSANE) are disordered. Residues 176–192 (ERQRAKERSENEVESTS) are hinge. The NR LBD domain occupies 195–426 (NEDMPVEKIL…TFLMEMLEAP (232 aa)). 9-cis-retinoate is bound by residues R284 and A295. 2 residues coordinate all-trans-retinoate: R284 and A295. Positions 316-336 (RVLTELVSKMRDMQMDKTELG) are required for nuclear export. Positions 415-426 (IDTFLMEMLEAP) are AF-2.

It belongs to the nuclear hormone receptor family. NR2 subfamily. As to quaternary structure, homodimer. Heterodimer; with a rar molecule. Binds DNA preferentially as a rar/rxr heterodimer.

Its subcellular location is the nucleus. In terms of biological role, receptor for retinoic acid that acts as a transcription factor. Forms homo- or heterodimers with retinoic acid receptors (rars) and binds to target response elements in response to their ligands, all-trans or 9-cis retinoic acid, to regulate gene expression in various biological processes. The rar/rxr heterodimers bind to the retinoic acid response elements (RARE) composed of tandem 5'-AGGTCA-3' sites known as DR1-DR5 to regulate transcription. The high affinity ligand for rxrs is 9-cis retinoic acid. In the absence of ligand, the rar/rxr heterodimers associate with a multiprotein complex containing transcription corepressors that induce histone deacetylation, chromatin condensation and transcriptional suppression. On ligand binding, the corepressors dissociate from the receptors and coactivators are recruited leading to transcriptional activation. This is Retinoic acid receptor RXR-alpha-A from Danio rerio (Zebrafish).